Consider the following 201-residue polypeptide: Dermatopontin (201 aa).

The first 18 residues, 1–18 (MDLSLLWVLLPLVTMAWG), serve as a signal peptide directing secretion. Glutamine 19 is modified (pyrrolidone carboxylic acid). Tyrosine 23 bears the Sulfotyrosine mark. A run of 4 repeats spans residues 26–79 (PYQQ…ACMP), 70–75 (DRQWNY), 80–135 (TPQS…CCRY), and 125–130 (DREWQF). The segment at 26–186 (PYQQYHDYSD…AVERDRQWKF (161 aa)) is 2 X 53-55 AA tandem repeats. 5 disulfides stabilise this stretch: cysteine 50-cysteine 77, cysteine 90-cysteine 132, cysteine 106-cysteine 133, cysteine 139-cysteine 196, and cysteine 143-cysteine 189. Residues 70-186 (DRQWNYACMP…AVERDRQWKF (117 aa)) form a 3 X 6 AA repeats of D-R-[EQ]-W-[NQK]-[FY] region. Tyrosine 162, tyrosine 164, tyrosine 166, and tyrosine 167 each carry sulfotyrosine. The stretch at 181 to 186 (DRQWKF) is one 3-3 repeat. At tyrosine 194 the chain carries Sulfotyrosine.

This sequence belongs to the dermatopontin family. In terms of assembly, interacts with TGFB1, DCN and collagen. Sulfated on tyrosine residue(s). In terms of tissue distribution, expressed in fibroblasts, heart, skeletal muscle, brain and pancreas. Expressed at an intermediate level in lung and kidney, and at a low level in liver and placenta. Expressed at a lower level in fibroblasts from hypertrophic scar lesional skin and in fibroblasts from patients with systemic sclerosis than in normal skin fibroblasts.

It is found in the secreted. The protein resides in the extracellular space. Its subcellular location is the extracellular matrix. Its function is as follows. Seems to mediate adhesion by cell surface integrin binding. May serve as a communication link between the dermal fibroblast cell surface and its extracellular matrix environment. Enhances TGFB1 activity. Inhibits cell proliferation. Accelerates collagen fibril formation, and stabilizes collagen fibrils against low-temperature dissociation. The polypeptide is Dermatopontin (DPT) (Homo sapiens (Human)).